A 261-amino-acid chain; its full sequence is X-box-binding protein 1 (261 aa).

The Cytoplasmic portion of the chain corresponds to 1 to 185; that stretch reads MVVVAAAPNP…VQAQLSPLQN (185 aa). Positions 44-93 are disordered; that stretch reads RGASPEAASGGLPQARKRQRLTHLSPEEKALRRKLKNRVAAQTARDRKKA. Phosphoserine is present on residues serine 47 and serine 68. The 64-residue stretch at 70-133 folds into the bZIP domain; sequence EEKALRRKLK…HGLVVENQEL (64 aa). The basic motif stretch occupies residues 72–94; it reads KALRRKLKNRVAAQTARDRKKAR. The nuclear localization signal (NLS); in isoforms 1 and isoform 2 stretch occupies residues 75–92; the sequence is RRKLKNRVAAQTARDRKK. A leucine-zipper region spans residues 98–133; it reads LEQQVVDLEEENQKLLLENQLLREKTHGLVVENQEL. Residues 186-203 traverse the membrane as a helical; Signal-anchor for type II membrane protein segment; that stretch reads ISPWILAVLTLQIQSLIS. Topologically, residues 204 to 261 are lumenal; the sequence is CWAFWTTWTQSCSSNALPQSLPAWRSSQRSTQKDPVPYQPPFLCQWGRHQPSWKPLMN. The interval 235–261 is necessary for the translational pausing of its own mRNA; it reads QKDPVPYQPPFLCQWGRHQPSWKPLMN.

This sequence belongs to the bZIP family. In terms of assembly, isoform 2 interacts with SIRT1. Isoform 2 interacts with PIK3R1 and PIK3R2; the interactions are direct and induce translocation of XBP1 isoform 2 into the nucleus and the unfolded protein response (UPR) XBP1-dependent target genes activation in a ER stress- and/or insulin-dependent but PI3K-independent manner. Isoform 2 interacts with FOXO1; the interaction is direct and leads to FOXO1 ubiquitination and degradation via the proteasome pathway in hepatocytes. Isoform 1 interacts with HM13. Isoform 1 interacts with RNF139; the interaction induces ubiquitination and degradation of isoform 1. Isoform 1 interacts (via luminal domain) with DERL1; the interaction obviates the need for ectodomain shedding prior HM13/SPP-mediated XBP1 isoform 1 cleavage. Isoform 1 interacts with isoform 2; the interaction sequesters isoform 2 from the nucleus and enhances isoform 2 degradation in the cytoplasm. Isoform 1 interacts with HDAC3 and AKT1; the interactions occur in endothelial cell (EC) under disturbed flow. Isoform 1 interacts with the oncoprotein FOS. Isoform 2 interacts with ATF6; the interaction occurs in a ER stress-dependent manner and is required for DNA binding to the unfolded protein response element (UPRE). Isoform 2 interacts with PIK3R1; the interaction is direct and induces translocation of XBP1 isoform 2 into the nucleus and the unfolded protein response (UPR) XBP1-dependent target genes activation in a ER stress- and/or insulin-dependent but PI3K-independent manner. Post-translationally, acetylated by EP300; acetylation positively regulates the transcriptional activity of XBP1 isoform 2. Isoform 2 is deacetylated by SIRT1; deacetylation negatively regulates the transcriptional activity of XBP1 isoform 2. Ubiquitinated, leading to proteasome-mediated degradation in response to ER stress. In terms of processing, X-box-binding protein 1, cytoplasmic form and luminal form are produced by intramembrane proteolytic cleavage of ER membrane-anchored isoform 1 triggered by HM13/SPP in a DERL1-RNF139-dependent and VCP/p97-independent manner. X-box-binding protein 1, luminal form is ubiquitinated leading to proteasomal degradation. Expressed in plasma cells in rheumatoid synovium. Over-expressed in primary breast cancer and metastatic breast cancer cells. Isoform 1 and isoform 2 are expressed at higher level in proliferating as compared to confluent quiescent endothelial cells.

The protein resides in the endoplasmic reticulum. It localises to the nucleus. It is found in the cytoplasm. Its subcellular location is the endoplasmic reticulum membrane. The protein localises to the membrane. Functionally, functions as a transcription factor during endoplasmic reticulum (ER) stress by regulating the unfolded protein response (UPR). Required for cardiac myogenesis and hepatogenesis during embryonic development, and the development of secretory tissues such as exocrine pancreas and salivary gland. Involved in terminal differentiation of B lymphocytes to plasma cells and production of immunoglobulins. Modulates the cellular response to ER stress in a PIK3R-dependent manner. Binds to the cis-acting X box present in the promoter regions of major histocompatibility complex class II genes. Involved in VEGF-induced endothelial cell (EC) proliferation and retinal blood vessel formation during embryonic development but also for angiogenesis in adult tissues under ischemic conditions. Also functions as a major regulator of the UPR in obesity-induced insulin resistance and type 2 diabetes for the management of obesity and diabetes prevention. Its function is as follows. Plays a role in the unconventional cytoplasmic splicing processing of its own mRNA triggered by the endoplasmic reticulum (ER) transmembrane endoribonuclease ERN1: upon ER stress, the emerging XBP1 polypeptide chain, as part of a mRNA-ribosome-nascent chain (R-RNC) complex, cotranslationally recruits its own unprocessed mRNA through transient docking to the ER membrane and translational pausing, therefore facilitating efficient IRE1-mediated XBP1 mRNA isoform 2 production. In endothelial cells (EC), associated with KDR, promotes IRE1-mediated XBP1 mRNA isoform 2 productions in a vascular endothelial growth factor (VEGF)-dependent manner, leading to EC proliferation and angiogenesis. Functions as a negative feed-back regulator of the potent transcription factor XBP1 isoform 2 protein levels through proteasome-mediated degradation, thus preventing the constitutive activation of the ER stress response signaling pathway. Inhibits the transactivation activity of XBP1 isoform 2 in myeloma cells. Acts as a weak transcriptional factor. Together with HDAC3, contributes to the activation of NFE2L2-mediated HMOX1 transcription factor gene expression in a PI(3)K/mTORC2/Akt-dependent signaling pathway leading to EC survival under disturbed flow/oxidative stress. Binds to the ER stress response element (ERSE) upon ER stress. Binds to the consensus 5'-GATGACGTG[TG]N(3)[AT]T-3' sequence related to cAMP responsive element (CRE)-like sequences. Binds the Tax-responsive element (TRE) present in the long terminal repeat (LTR) of T-cell leukemia virus type 1 (HTLV-I) and to the TPA response elements (TRE). Associates preferentially to the HDAC3 gene promoter region in a static flow-dependent manner. Binds to the CDH5/VE-cadherin gene promoter region. In terms of biological role, functions as a stress-inducible potent transcriptional activator during endoplasmic reticulum (ER) stress by inducing unfolded protein response (UPR) target genes via binding to the UPR element (UPRE). Up-regulates target genes encoding ER chaperones and ER-associated degradation (ERAD) components to enhance the capacity of productive folding and degradation mechanism, respectively, in order to maintain the homeostasis of the ER under ER stress. Plays a role in the production of immunoglobulins and interleukin-6 in the presence of stimuli required for plasma cell differentiation. Induces phospholipid biosynthesis and ER expansion. Contributes to the VEGF-induced endothelial cell (EC) growth and proliferation in a Akt/GSK-dependent and/or -independent signaling pathway, respectively, leading to beta-catenin nuclear translocation and E2F2 gene expression. Promotes umbilical vein EC apoptosis and atherosclerotisis development in a caspase-dependent signaling pathway, and contributes to VEGF-induced EC proliferation and angiogenesis in adult tissues under ischemic conditions. Involved in the regulation of endostatin-induced autophagy in EC through BECN1 transcriptional activation. Plays a role as an oncogene by promoting tumor progression: stimulates zinc finger protein SNAI1 transcription to induce epithelial-to-mesenchymal (EMT) transition, cell migration and invasion of breast cancer cells. Involved in adipocyte differentiation by regulating lipogenic gene expression during lactation. Plays a role in the survival of both dopaminergic neurons of the substantia nigra pars compacta (SNpc), by maintaining protein homeostasis and of myeloma cells. Increases insulin sensitivity in the liver as a response to a high carbohydrate diet, resulting in improved glucose tolerance. Also improves glucose homeostasis in an ER stress- and/or insulin-independent manner through both binding and proteasome-induced degradation of the transcription factor FOXO1, hence resulting in suppression of gluconeogenic genes expression and in a reduction of blood glucose levels. Controls the induction of de novo fatty acid synthesis in hepatocytes by regulating the expression of a subset of lipogenic genes in an ER stress- and UPR-independent manner. Associates preferentially to the HDAC3 gene promoter region in a disturbed flow-dependent manner. Binds to the BECN1 gene promoter region. Binds to the CDH5/VE-cadherin gene promoter region. Binds to the ER stress response element (ERSE) upon ER stress. Binds to the 5'-CCACG-3' motif in the PPARG promoter. The protein is X-box-binding protein 1 of Homo sapiens (Human).